The following is a 277-amino-acid chain: MPELPEVETIVRSLEKHLSGLVITSVDLFKPEVIRTPRVDIFTDQIVGRQFQKKLGRRGKYLLLHMSDGLTLVIHLRMTGRLIYCDADLPLEKHTHVIFHLDNGKQLRFADVRRFGRMSLVPTREVPHLPGIKEMGPEPLDTAFSREYLKKELRRRRTRIKSLLLDQCFVAGLGNIYADEALHEAKIHPERLAPDLTSREASGLHKAIIEVISSGIKHRGTTFRDYVDGEGRSGSYQHQLKVYNREGLPCPHCGKPIQRIKVAGRSSYYCSSCQKAK.

Residue P2 is the Schiff-base intermediate with DNA of the active site. The Proton donor role is filled by E3. The Proton donor; for beta-elimination activity role is filled by K60. Residues H94, R113, and R156 each contribute to the DNA site. Residues 241 to 275 (KVYNREGLPCPHCGKPIQRIKVAGRSSYYCSSCQK) form an FPG-type zinc finger. The Proton donor; for delta-elimination activity role is filled by R265.

It belongs to the FPG family. Monomer. The cofactor is Zn(2+).

The enzyme catalyses Hydrolysis of DNA containing ring-opened 7-methylguanine residues, releasing 2,6-diamino-4-hydroxy-5-(N-methyl)formamidopyrimidine.. The catalysed reaction is 2'-deoxyribonucleotide-(2'-deoxyribose 5'-phosphate)-2'-deoxyribonucleotide-DNA = a 3'-end 2'-deoxyribonucleotide-(2,3-dehydro-2,3-deoxyribose 5'-phosphate)-DNA + a 5'-end 5'-phospho-2'-deoxyribonucleoside-DNA + H(+). Its function is as follows. Involved in base excision repair of DNA damaged by oxidation or by mutagenic agents. Acts as a DNA glycosylase that recognizes and removes damaged bases. Has a preference for oxidized purines, such as 7,8-dihydro-8-oxoguanine (8-oxoG). Has AP (apurinic/apyrimidinic) lyase activity and introduces nicks in the DNA strand. Cleaves the DNA backbone by beta-delta elimination to generate a single-strand break at the site of the removed base with both 3'- and 5'-phosphates. This chain is Formamidopyrimidine-DNA glycosylase, found in Desulforamulus reducens (strain ATCC BAA-1160 / DSM 100696 / MI-1) (Desulfotomaculum reducens).